The primary structure comprises 481 residues: Argininosuccinate lyase (481 aa).

It belongs to the lyase 1 family. Argininosuccinate lyase subfamily.

The protein localises to the cytoplasm. The catalysed reaction is 2-(N(omega)-L-arginino)succinate = fumarate + L-arginine. Its pathway is amino-acid biosynthesis; L-arginine biosynthesis; L-arginine from L-ornithine and carbamoyl phosphate: step 3/3. The sequence is that of Argininosuccinate lyase from Kineococcus radiotolerans (strain ATCC BAA-149 / DSM 14245 / SRS30216).